The chain runs to 303 residues: Quinolinate synthase (303 aa).

Residues His25 and Ser42 each contribute to the iminosuccinate site. Cys87 provides a ligand contact to [4Fe-4S] cluster. Iminosuccinate contacts are provided by residues 113–115 (YVN) and Ser130. Cys173 contacts [4Fe-4S] cluster. Residues 199–201 (HPE) and Thr216 each bind iminosuccinate. Cys261 lines the [4Fe-4S] cluster pocket.

It belongs to the quinolinate synthase family. Type 2 subfamily. The cofactor is [4Fe-4S] cluster.

It is found in the cytoplasm. It carries out the reaction iminosuccinate + dihydroxyacetone phosphate = quinolinate + phosphate + 2 H2O + H(+). Its pathway is cofactor biosynthesis; NAD(+) biosynthesis; quinolinate from iminoaspartate: step 1/1. Functionally, catalyzes the condensation of iminoaspartate with dihydroxyacetone phosphate to form quinolinate. In Desulforudis audaxviator (strain MP104C), this protein is Quinolinate synthase.